The primary structure comprises 154 residues: Egg-lysin (154 aa).

Positions 1–18 (MKLLVLWVFAMMATVAMS) are cleaved as a signal peptide.

In terms of assembly, monomer. Homodimer. Molecules associate into dimers and then rapidly dissociate again. Interacts (as a monomer) with the egg vitelline layer protein VERL (via VERL repeats); each VERL chain can bind multiple copies of lysin. In terms of tissue distribution, sperm.

It is found in the cytoplasmic vesicle. It localises to the secretory vesicle. The protein resides in the acrosome lumen. Creates a 3 um hole in the egg vitelline layer through which the sperm passes. Does not have enzyme activity. Species-specific interaction between the sperm protein lysin and the egg protein VERL exposes a basic surface on lysin that may dissociate the egg vitelline layer via electrostatic repulsion. Plays a role in ensuring species-specific fertilization. In Haliotis fulgens (Green abalone), this protein is Egg-lysin.